The sequence spans 358 residues: UDP-N-acetylglucosamine--N-acetylmuramyl-(pentapeptide) pyrophosphoryl-undecaprenol N-acetylglucosamine transferase (358 aa).

UDP-N-acetyl-alpha-D-glucosamine is bound by residues 11-13 (TGG), N122, R161, S189, I243, 262-267 (ALTVCE), and Q288.

The protein belongs to the glycosyltransferase 28 family. MurG subfamily.

It localises to the cell inner membrane. The enzyme catalyses di-trans,octa-cis-undecaprenyl diphospho-N-acetyl-alpha-D-muramoyl-L-alanyl-D-glutamyl-meso-2,6-diaminopimeloyl-D-alanyl-D-alanine + UDP-N-acetyl-alpha-D-glucosamine = di-trans,octa-cis-undecaprenyl diphospho-[N-acetyl-alpha-D-glucosaminyl-(1-&gt;4)]-N-acetyl-alpha-D-muramoyl-L-alanyl-D-glutamyl-meso-2,6-diaminopimeloyl-D-alanyl-D-alanine + UDP + H(+). It functions in the pathway cell wall biogenesis; peptidoglycan biosynthesis. Its function is as follows. Cell wall formation. Catalyzes the transfer of a GlcNAc subunit on undecaprenyl-pyrophosphoryl-MurNAc-pentapeptide (lipid intermediate I) to form undecaprenyl-pyrophosphoryl-MurNAc-(pentapeptide)GlcNAc (lipid intermediate II). The protein is UDP-N-acetylglucosamine--N-acetylmuramyl-(pentapeptide) pyrophosphoryl-undecaprenol N-acetylglucosamine transferase of Coxiella burnetii (strain CbuK_Q154) (Coxiella burnetii (strain Q154)).